The following is a 49-amino-acid chain: Protein OPG059 (49 aa).

Met1 is a topological domain (virion surface). Residues 2–22 (VIGLVIFVSVAAAIVGVLSNV) traverse the membrane as a helical segment. At 23–49 (LDMLMYVEENNEEDARIKEEQELLLLY) the chain is on the intravirion side.

This sequence belongs to the orthopoxvirus OPG058 family.

Its subcellular location is the virion membrane. The protein resides in the host membrane. May play a role in cell adhesion and is important for virus virulence in vivo, although it is not required for the virus life cycle in cell cultures. The polypeptide is Protein OPG059 (OPG059) (Vaccinia virus (strain Western Reserve) (VACV)).